A 427-amino-acid chain; its full sequence is Transcobalamin-2 (427 aa).

Residues 1 to 18 form the signal peptide; sequence MRHLGAFLFLLGVLGALT. 4 disulfides stabilise this stretch: Cys21–Cys267, Cys83–Cys96, Cys116–Cys309, and Cys165–Cys205. Residues Gln104, 152-156, His190, 190-194, Asn242, Ser245, Gln291, and 395-397 each bind cob(II)alamin; these read TSYYQ, HHSVD, and WQL.

This sequence belongs to the eukaryotic cobalamin transport proteins family. Interacts with CD320 (via LDL-receptor class A domains).

The protein localises to the secreted. In terms of biological role, primary vitamin B12-binding and transport protein. Delivers cobalamin to cells. In Homo sapiens (Human), this protein is Transcobalamin-2 (TCN2).